The sequence spans 248 residues: Ubiquinone biosynthesis O-methyltransferase (248 aa).

Residues R41, G72, D93, and M136 each contribute to the S-adenosyl-L-methionine site.

This sequence belongs to the methyltransferase superfamily. UbiG/COQ3 family.

The catalysed reaction is a 3-demethylubiquinol + S-adenosyl-L-methionine = a ubiquinol + S-adenosyl-L-homocysteine + H(+). The enzyme catalyses a 3-(all-trans-polyprenyl)benzene-1,2-diol + S-adenosyl-L-methionine = a 2-methoxy-6-(all-trans-polyprenyl)phenol + S-adenosyl-L-homocysteine + H(+). The protein operates within cofactor biosynthesis; ubiquinone biosynthesis. In terms of biological role, O-methyltransferase that catalyzes the 2 O-methylation steps in the ubiquinone biosynthetic pathway. The polypeptide is Ubiquinone biosynthesis O-methyltransferase (Rhizobium etli (strain CIAT 652)).